The sequence spans 388 residues: Sulfate adenylyltransferase (388 aa).

Belongs to the sulfate adenylyltransferase family.

It catalyses the reaction sulfate + ATP + H(+) = adenosine 5'-phosphosulfate + diphosphate. It participates in sulfur metabolism; hydrogen sulfide biosynthesis; sulfite from sulfate: step 1/3. The sequence is that of Sulfate adenylyltransferase from Trichodesmium erythraeum (strain IMS101).